A 344-amino-acid polypeptide reads, in one-letter code: Arginine N-succinyltransferase (344 aa).

Residue Leu-125 coordinates succinyl-CoA. The Proton donor role is filled by His-229.

The protein belongs to the arginine N-succinyltransferase family.

It carries out the reaction succinyl-CoA + L-arginine = N(2)-succinyl-L-arginine + CoA + H(+). Its pathway is amino-acid degradation; L-arginine degradation via AST pathway; L-glutamate and succinate from L-arginine: step 1/5. In terms of biological role, catalyzes the transfer of succinyl-CoA to arginine to produce N(2)-succinylarginine. The sequence is that of Arginine N-succinyltransferase from Escherichia coli O157:H7.